The sequence spans 550 residues: Tyrosinase HcTyr2 (550 aa).

Cu cation contacts are provided by H56, H84, H93, H282, H286, and H326.

Belongs to the tyrosinase family. Requires Cu(2+) as cofactor.

It carries out the reaction L-tyrosine + O2 = L-dopaquinone + H2O. It catalyses the reaction 2 L-tyrosine + O2 = 2 L-dopa. The catalysed reaction is 2 L-dopa + O2 = 2 L-dopaquinone + 2 H2O. Functionally, copper-containing oxidase that catalyzes the conversion of L-tyrosine to L-dopa and then to L-dopaquinone. Can use various phenols such as p-coumaric acid, phenol, pyrocatechol, syringol or pyrogallol. Accepts several of the constituents of lignin and potentially participates in lignin functionalization. The protein is Tyrosinase HcTyr2 of Hahella sp. (strain CCB-MM4).